Here is a 485-residue protein sequence, read N- to C-terminus: NADH-quinone oxidoreductase subunit N (485 aa).

14 helical membrane-spanning segments follow: residues 8–28 (LIAL…MLSI), 35–55 (FLNA…LWFV), 71–91 (GFAM…CTFA), 105–125 (FYLL…ANHL), 127–147 (TLFL…GYAF), 159–179 (YTIL…LVYA), 203–223 (LLAG…LVPF), 235–255 (PAPV…GVVM), 271–291 (VVLG…ALSQ), 297–317 (LLGY…IALQ), 326–346 (VGVY…VVSL), 373–393 (AAVM…LGFI), 408–430 (WWLV…RVAV), and 455–475 (IVVL…QPLI).

This sequence belongs to the complex I subunit 2 family. As to quaternary structure, NDH-1 is composed of 13 different subunits. Subunits NuoA, H, J, K, L, M, N constitute the membrane sector of the complex.

The protein resides in the cell inner membrane. It catalyses the reaction a quinone + NADH + 5 H(+)(in) = a quinol + NAD(+) + 4 H(+)(out). In terms of biological role, NDH-1 shuttles electrons from NADH, via FMN and iron-sulfur (Fe-S) centers, to quinones in the respiratory chain. The immediate electron acceptor for the enzyme in this species is believed to be ubiquinone. Couples the redox reaction to proton translocation (for every two electrons transferred, four hydrogen ions are translocated across the cytoplasmic membrane), and thus conserves the redox energy in a proton gradient. The chain is NADH-quinone oxidoreductase subunit N from Salmonella paratyphi A (strain ATCC 9150 / SARB42).